The chain runs to 651 residues: MSTELTQAKGSTSRYTSRKSCAIEFNTKIDEVQYISVGLDTSTIKVFIDNNTQIPYVGNFINGNVISWVSDPVKCILTTSSGTYTLFSYGLTKNIPNLLDYDSDSATDDSTRFKKAILAGTESLYIPPREIYKDVMIGELDITSTLRLWGDSGSNINTGGSTIKKIASASYGIHFNGTGQTTRPMGGGLFNLQVRGESSTDTGPLIKVTSWSYMRINNCAIQNISDWGIIARDMMESSCEYTLFRRIGSDTTGILLMDDYIGTPNSNVNNFHFSNNTLGYSSGNWIKSSTNSNPDLIWIERNKFEWDGTPTSANITPKAVIDFGQMSRCRITNNGFTHFTTDHNNYEGILRMRSGCAYLTKLIDNDALSCSGYFGSVEGGKLQASGNFYNRGVVASGNMQFNVTSTRPQSIEPVICFTSNGNITSVGDYIDPNFISAHNMFGTSNNMFQTDTMASLYTTMNVPSLVEIRRFQLGKQYLDSNTVLTIQARVKCVDTAGTNGELKLNIDGTTDIGSSTITASTGWQLITFQLKPSQIGAGSLRFINSGTVSILFDGIYIQRSKYIDWNFAFNPGAIAAGASITSALQSYTDTIGVTGLIQSFSQPKFDGNINGLLCSVVSNNINGSFYVTLYNPTASPITPTITRCYIRLFLI.

Residues 100-428 (DYDSDSATDD…SNGNITSVGD (329 aa)) are catalytic. Residues E236, D295, E305, and D307 contribute to the active site. The tract at residues 447 to 560 (MFQTDTMASL…LFDGIYIQRS (114 aa)) is carbohydrate binding. The segment at 561–651 (KYIDWNFAFN…TRCYIRLFLI (91 aa)) is lectin-like.

This sequence in the C-terminal section; belongs to the K21-specific depolymerase family.

It localises to the virion. Functionally, functions as a receptor binding protein (RBP) and probably mediates the attachment to the host capsular exopolysaccharides. Displays a depolymerase activity that specifically degrades the K21-type polysaccharides of Klebsiella pneumoniae capsule. In Klebsiella (Bacteriophage K64-1), this protein is Depolymerase, capsule K21-specific.